Reading from the N-terminus, the 921-residue chain is Collagen alpha-1(IX) chain (921 aa).

The signal sequence occupies residues 1–23; that stretch reads MKNFWKISVFFCVCSCLGPWVSA. Residues 24–268 form a nonhelical region (NC4) region; it reads TLKRRARFPA…ITTSQTTDER (245 aa). Disulfide bonds link cysteine 44-cysteine 242 and cysteine 198-cysteine 252. Residues 50 to 244 enclose the Laminin G-like domain; sequence GQDDLPGFDL…LQWMLIHCDP (195 aa). Zn(2+) contacts are provided by aspartate 213, aspartate 215, and histidine 253. Disordered regions lie at residues 253–759 and 783–921; these read HELP…APTD and RPDT…GPDK. Collagen-like domains lie at 269–325, 326–356, 358–403, 416–472, 473–512, 604–656, 657–711, and 712–755; these read GPPG…PGAD, GLTG…GFPG, GIPG…GTIG, PPGR…GLRG, ITGI…PPGE, GKPG…LPGP, PGLP…PGEP, and GLRG…PPGR. The interval 269-405 is triple-helical region (COL3); that stretch reads GPPGEQGPPG…PGPSGTIGFH (137 aa). Composition is skewed to pro residues over residues 273–285 and 298–310; these read EQGP…PPGV and KGPP…PGDP. Residues 368-383 are compositionally biased toward low complexity; it reads TTGLPGELGRVGPIGD. Pro residues predominate over residues 387 to 398; sequence RGPPGPPGPPGP. Residues 406–417 are nonhelical region (NC3); sequence DGDPLCPNSCPP. Residues 418-756 form a triple-helical region (COL2) region; the sequence is GRSGYPGLPG…PGIQGPPGRA (339 aa). Over residues 479–489 the composition is skewed to basic and acidic residues; it reads DKGEKGARGFD. Low complexity-rich tracts occupy residues 594 to 632 and 639 to 650; these read PGKP…PVGP and PGKLGSVGSPGL. The interval 757-786 is nonhelical region (NC2); the sequence is PTDQHIKQVCMRVVQEHFVEMAASLKRPDT. Residues 787–901 are triple-helical region (COL1); sequence GASGLPGRPG…PGPPGPPGFC (115 aa). Positions 790-847 constitute a Collagen-like 9 domain; the sequence is GLPGRPGPPGPPGPPGENGFPGQMGIRGLPGIKGPPGALGLRGPKGDLGEKGERGPPG. Residues 794-804 show a composition bias toward pro residues; it reads RPGPPGPPGPP. The segment covering 833–845 has biased composition (basic and acidic residues); that stretch reads PKGDLGEKGERGP. The segment covering 888–900 has biased composition (pro residues); that stretch reads VPGPPGPPGPPGF. The segment at 902 to 921 is nonhelical region (NC1); that stretch reads EPASCTLQSGQRAFSKGPDK.

Belongs to the fibril-associated collagens with interrupted helices (FACIT) family. Heterotrimer of an alpha 1(IX), an alpha 2(IX) and an alpha 3(IX) chain. Covalently linked to the telopeptides of type II collagen by lysine-derived cross-links. Post-translationally, prolines at the third position of the tripeptide repeating unit (G-X-Y) are hydroxylated in some or all of the chains.

Its subcellular location is the secreted. The protein localises to the extracellular space. The protein resides in the extracellular matrix. Its function is as follows. Structural component of hyaline cartilage and vitreous of the eye. This Mus musculus (Mouse) protein is Collagen alpha-1(IX) chain (Col9a1).